The primary structure comprises 161 residues: Probable ubiquitin-conjugating enzyme E2 17 (161 aa).

Residues 15–161 (IATNRLQKEF…TRWRFHDDKV (147 aa)) enclose the UBC core domain. Cysteine 99 functions as the Glycyl thioester intermediate in the catalytic mechanism.

This sequence belongs to the ubiquitin-conjugating enzyme family.

The enzyme catalyses S-ubiquitinyl-[E1 ubiquitin-activating enzyme]-L-cysteine + [E2 ubiquitin-conjugating enzyme]-L-cysteine = [E1 ubiquitin-activating enzyme]-L-cysteine + S-ubiquitinyl-[E2 ubiquitin-conjugating enzyme]-L-cysteine.. It participates in protein modification; protein ubiquitination. Its function is as follows. Accepts the ubiquitin from the E1 complex and catalyzes its covalent attachment to other proteins. This chain is Probable ubiquitin-conjugating enzyme E2 17 (UBC17), found in Arabidopsis thaliana (Mouse-ear cress).